A 127-amino-acid chain; its full sequence is Snaclec bothroinsularin subunit beta (127 aa).

Intrachain disulfides connect Cys-2-Cys-13, Cys-30-Cys-123, and Cys-100-Cys-115. A C-type lectin domain is found at Tyr-9–Glu-124.

Belongs to the snaclec family. As to quaternary structure, heterodimer of subunits alpha and beta; disulfide-linked. In terms of tissue distribution, expressed by the venom gland.

It is found in the secreted. In terms of biological role, thrombin and prothrombin (F2) inhibitor. The IC(50) of thrombin-induced platelet aggregation and fibrinocoagulation is 62 and 35 nM, respectively. Its inhibitory activity is at least 10-fold lower than that observed for other thrombin inhibitors. This Bothrops insularis (Golden lancehead) protein is Snaclec bothroinsularin subunit beta.